A 422-amino-acid chain; its full sequence is Alcohol dehydrogenase 4 (422 aa).

The N-terminal 29 residues, 1 to 29 (MSILRSPFRLIRSPARFFPSLFHSSCNQS), are a transit peptide targeting the mitochondrion. 10 residues coordinate NAD(+): Asp82, Asn114, Gly141, Ser142, Thr181, Thr182, Thr190, Phe192, Lys203, and Gly225. Fe(2+) contacts are provided by Asp237, His241, and His306. Residues His310 and His320 each coordinate NAD(+). His320 provides a ligand contact to Fe(2+).

Belongs to the iron-containing alcohol dehydrogenase family. The cofactor is Zn(2+).

Its subcellular location is the mitochondrion matrix. It catalyses the reaction a primary alcohol + NAD(+) = an aldehyde + NADH + H(+). It carries out the reaction a secondary alcohol + NAD(+) = a ketone + NADH + H(+). The catalysed reaction is ethanol + NAD(+) = acetaldehyde + NADH + H(+). Involved in ethanol oxidation in mitochondria. This is Alcohol dehydrogenase 4 (adh4) from Schizosaccharomyces pombe (strain 972 / ATCC 24843) (Fission yeast).